A 158-amino-acid chain; its full sequence is Immunoglobulin J chain (158 aa).

Positions 1 to 22 are cleaved as a signal peptide; sequence MKNHLFFWGVLAIFVQAVLVTA. Disulfide bonds link Cys36–Cys122, Cys95–Cys115, and Cys130–Cys155. The N-linked (GlcNAc...) (complex) asparagine glycan is linked to Asn72.

Part of the secretory IgA (sIgA) complex that consists of two, four or five IgA monomers, and two additional non-Ig polypeptides, namely the JCHAIN and the secretory component (the proteolytic product of PIGR). Part of the secretory IgM (sIgM) complex that consist of five IgM monomers, and two additional non-Ig polypeptides, namely the JCHAIN and the secretory component (the proteolytic product of PIGR). JCHAIN-containing IgM interacts (via CH4 domain) with FCRM (via Ig-like domain). N-glycosylated. N-glycans attached to Asn-72 varies from truncated, differentially fucosylated to sialylated (NeuGc) complex types: Man3GlcNAc2; GlcNAc2Man3GlcNAc2(Fuc); Gal1GlcNAc1Man3GlcNAc2; GlcNAc2Man3GlcNAc2; GlcNAc1Man3GlcNAc2; GlcNAc1Man2GlcNAc2 and NeuGc1Gal1GlcNAc2Man3GlcNAc2.

The protein resides in the secreted. Its function is as follows. Serves to link two monomer units of either IgM or IgA. In the case of IgM, the J chain-joined dimer is a nucleating unit for the IgM pentamer, and in the case of IgA it induces dimers and/or larger polymers. It also helps to bind these immunoglobulins to secretory component. The protein is Immunoglobulin J chain (JCHAIN) of Equus asinus (Donkey).